Reading from the N-terminus, the 359-residue chain is Fructose-bisphosphate aldolase (359 aa).

Ser-62 is a binding site for D-glyceraldehyde 3-phosphate. Asp-110 serves as the catalytic Proton donor. Positions 111, 145, 175, and 227 each coordinate Zn(2+). Dihydroxyacetone phosphate is bound at residue Gly-228. His-265 is a binding site for Zn(2+). Dihydroxyacetone phosphate is bound by residues 266–268 (GGS) and 287–290 (NIDT).

Belongs to the class II fructose-bisphosphate aldolase family. Homodimer. It depends on Zn(2+) as a cofactor.

It catalyses the reaction beta-D-fructose 1,6-bisphosphate = D-glyceraldehyde 3-phosphate + dihydroxyacetone phosphate. It functions in the pathway carbohydrate degradation; glycolysis; D-glyceraldehyde 3-phosphate and glycerone phosphate from D-glucose: step 4/4. Catalyzes the aldol condensation of dihydroxyacetone phosphate (DHAP or glycerone-phosphate) with glyceraldehyde 3-phosphate (G3P) to form fructose 1,6-bisphosphate (FBP) in gluconeogenesis and the reverse reaction in glycolysis. The chain is Fructose-bisphosphate aldolase (fba) from Haemophilus influenzae (strain ATCC 51907 / DSM 11121 / KW20 / Rd).